Consider the following 626-residue polypeptide: DNA-directed RNA polymerase subunit beta C-terminal section (626 aa).

Residues 287–307 (NTKSKNTGKGSKPPRASKAQN) form a disordered region.

It belongs to the RNA polymerase beta chain family. In terms of assembly, in plastids the minimal PEP RNA polymerase catalytic core is composed of four subunits: alpha, beta, beta', and beta''. When a (nuclear-encoded) sigma factor is associated with the core the holoenzyme is formed, which can initiate transcription.

It localises to the plastid. The protein resides in the chloroplast. It catalyses the reaction RNA(n) + a ribonucleoside 5'-triphosphate = RNA(n+1) + diphosphate. In terms of biological role, DNA-dependent RNA polymerase catalyzes the transcription of DNA into RNA using the four ribonucleoside triphosphates as substrates. The chain is DNA-directed RNA polymerase subunit beta C-terminal section (rpoB2) from Chlamydomonas reinhardtii (Chlamydomonas smithii).